We begin with the raw amino-acid sequence, 435 residues long: Tol-Pal system protein TolB (435 aa).

Positions Met1–Ala28 are cleaved as a signal peptide. The disordered stretch occupies residues Ser288–Asp310.

The protein belongs to the TolB family. As to quaternary structure, the Tol-Pal system is composed of five core proteins: the inner membrane proteins TolA, TolQ and TolR, the periplasmic protein TolB and the outer membrane protein Pal. They form a network linking the inner and outer membranes and the peptidoglycan layer.

The protein resides in the periplasm. In terms of biological role, part of the Tol-Pal system, which plays a role in outer membrane invagination during cell division and is important for maintaining outer membrane integrity. This chain is Tol-Pal system protein TolB, found in Rhizobium leguminosarum bv. trifolii (strain WSM2304).